Here is a 162-residue protein sequence, read N- to C-terminus: 6,7-dimethyl-8-ribityllumazine synthase (162 aa).

5-amino-6-(D-ribitylamino)uracil is bound by residues Phe-23, 61–63 (AYE), and 85–87 (AVI). 90 to 91 (DT) is a binding site for (2S)-2-hydroxy-3-oxobutyl phosphate. His-93 functions as the Proton donor in the catalytic mechanism. 5-amino-6-(D-ribitylamino)uracil is bound at residue Phe-118. Arg-132 serves as a coordination point for (2S)-2-hydroxy-3-oxobutyl phosphate.

The protein belongs to the DMRL synthase family.

The enzyme catalyses (2S)-2-hydroxy-3-oxobutyl phosphate + 5-amino-6-(D-ribitylamino)uracil = 6,7-dimethyl-8-(1-D-ribityl)lumazine + phosphate + 2 H2O + H(+). It functions in the pathway cofactor biosynthesis; riboflavin biosynthesis; riboflavin from 2-hydroxy-3-oxobutyl phosphate and 5-amino-6-(D-ribitylamino)uracil: step 1/2. In terms of biological role, catalyzes the formation of 6,7-dimethyl-8-ribityllumazine by condensation of 5-amino-6-(D-ribitylamino)uracil with 3,4-dihydroxy-2-butanone 4-phosphate. This is the penultimate step in the biosynthesis of riboflavin. The polypeptide is 6,7-dimethyl-8-ribityllumazine synthase (Synechococcus sp. (strain CC9902)).